Reading from the N-terminus, the 172-residue chain is Peptidyl-prolyl cis-trans isomerase (172 aa).

Residues 10–168 (YFDVYANEES…YRIEIRDCGV (159 aa)) form the PPIase cyclophilin-type domain.

Belongs to the cyclophilin-type PPIase family.

It localises to the cytoplasm. It catalyses the reaction [protein]-peptidylproline (omega=180) = [protein]-peptidylproline (omega=0). Functionally, PPIases accelerate the folding of proteins. They catalyze the cis-trans isomerization of proline imidic peptide bonds in oligopeptides. The polypeptide is Peptidyl-prolyl cis-trans isomerase (CPR1) (Encephalitozoon cuniculi (strain GB-M1) (Microsporidian parasite)).